The chain runs to 631 residues: tRNA uridine 5-carboxymethylaminomethyl modification enzyme MnmG (631 aa).

Position 13–18 (G13–G18) interacts with FAD. G273–F287 lines the NAD(+) pocket.

It belongs to the MnmG family. Homodimer. Heterotetramer of two MnmE and two MnmG subunits. FAD is required as a cofactor.

It localises to the cytoplasm. Functionally, NAD-binding protein involved in the addition of a carboxymethylaminomethyl (cmnm) group at the wobble position (U34) of certain tRNAs, forming tRNA-cmnm(5)s(2)U34. The chain is tRNA uridine 5-carboxymethylaminomethyl modification enzyme MnmG from Chromohalobacter salexigens (strain ATCC BAA-138 / DSM 3043 / CIP 106854 / NCIMB 13768 / 1H11).